We begin with the raw amino-acid sequence, 246 residues long: MSQVNMRDMLKAGVHFGHQTRYWNPKMGKFIFGARNKIHIINLEKTLPMFNEALTFVERLAAGKNKILFVGTKRSAGKIVREEAARCGMPYVDHRWLGGMLTNYKTIRQSIKRLRDLETQSQDGTFDKLTKKEALMRSRDLEKLERSLGGIKDMGGLPDALFVIDVDHERIAITEANKLGIPVIGVVDTNSSPEGVDYVIPGNDDAIRAVQLYLNSMAEAVIRGKQGAATSADEFVEEAPAESAEG.

It belongs to the universal ribosomal protein uS2 family.

The protein is Small ribosomal subunit protein uS2 of Pseudomonas aeruginosa (strain LESB58).